Reading from the N-terminus, the 114-residue chain is Monothiol glutaredoxin-S8 (114 aa).

The Glutaredoxin domain occupies 1-113; the sequence is MDRVTRLASQ…PLLRDAGALW (113 aa). Cys21 lines the [2Fe-2S] cluster pocket.

The protein belongs to the glutaredoxin family. CC-type subfamily.

The protein resides in the cytoplasm. Its function is as follows. May only reduce GSH-thiol disulfides, but not protein disulfides. The chain is Monothiol glutaredoxin-S8 (GRXS8) from Oryza sativa subsp. japonica (Rice).